The sequence spans 920 residues: 2-oxoadipate dehydrogenase complex component E1 (920 aa).

Residues 299-322 (QGKTRGRQQVKQDGDYSTDPHSRP) are disordered. A compositionally biased stretch (basic and acidic residues) spans 308–322 (VKQDGDYSTDPHSRP).

Belongs to the alpha-ketoglutarate dehydrogenase family. The 2-oxoadipate dehydrogenase complex is composed of OADH (2-oxoadipate dehydrogenase; E1a), DLST (dihydrolipoamide succinyltransferase; E2) and DLD (dihydrolipoamide dehydrogenase; E3). E1a functional unit is a dimer. The cofactor is thiamine diphosphate.

The protein localises to the mitochondrion. The catalysed reaction is N(6)-[(R)-lipoyl]-L-lysyl-[protein] + 2-oxoadipate + H(+) = N(6)-[(R)-S(8)-glutaryldihydrolipoyl]-L-lysyl-[protein] + CO2. It participates in amino-acid degradation. 2-oxoadipate dehydrogenase (E1a) component of the 2-oxoadipate dehydrogenase complex (OADHC). Participates in the first step, rate limiting for the overall conversion of 2-oxoadipate (alpha-ketoadipate) to glutaryl-CoA and CO(2) catalyzed by the whole OADHC. Catalyzes the irreversible decarboxylation of 2-oxoadipate via the thiamine diphosphate (ThDP) cofactor and subsequent transfer of the decarboxylated acyl intermediate on an oxidized dihydrolipoyl group that is covalently amidated to the E2 enzyme (dihydrolipoyllysine-residue succinyltransferase or DLST). Can catalyze the decarboxylation of 2-oxoglutarate in vitro, but at a much lower rate than 2-oxoadipate. Responsible for the last step of L-lysine, L-hydroxylysine and L-tryptophan catabolism with the common product being 2-oxoadipate. The protein is 2-oxoadipate dehydrogenase complex component E1 (dhtkd1) of Danio rerio (Zebrafish).